The chain runs to 357 residues: Homoserine O-succinyltransferase (357 aa).

Residue Cys-146 is the Acyl-thioester intermediate of the active site. Substrate is bound by residues Lys-167 and Ser-196. His-239 serves as the catalytic Proton acceptor. Residue Glu-241 is part of the active site. Arg-253 contributes to the substrate binding site.

This sequence belongs to the MetA family.

It localises to the cytoplasm. It carries out the reaction L-homoserine + succinyl-CoA = O-succinyl-L-homoserine + CoA. It participates in amino-acid biosynthesis; L-methionine biosynthesis via de novo pathway; O-succinyl-L-homoserine from L-homoserine: step 1/1. Its function is as follows. Transfers a succinyl group from succinyl-CoA to L-homoserine, forming succinyl-L-homoserine. This is Homoserine O-succinyltransferase from Allochromatium vinosum (strain ATCC 17899 / DSM 180 / NBRC 103801 / NCIMB 10441 / D) (Chromatium vinosum).